A 178-amino-acid chain; its full sequence is Cytochrome b6-f complex iron-sulfur subunit (178 aa).

Residues 20–42 (LLTFGSVTGVALGSLYPVVKYFI) traverse the membrane as a helical segment. The Rieske domain occupies 68–161 (WLANHSDGDR…IAVENDNVFV (94 aa)). 4 residues coordinate [2Fe-2S] cluster: cysteine 107, histidine 109, cysteine 125, and histidine 128. A disulfide bridge connects residues cysteine 112 and cysteine 127.

It belongs to the Rieske iron-sulfur protein family. As to quaternary structure, the 4 large subunits of the cytochrome b6-f complex are cytochrome b6, subunit IV (17 kDa polypeptide, PetD), cytochrome f and the Rieske protein, while the 4 small subunits are PetG, PetL, PetM and PetN. The complex functions as a dimer. The cofactor is [2Fe-2S] cluster.

The protein localises to the cellular thylakoid membrane. It catalyses the reaction 2 oxidized [plastocyanin] + a plastoquinol + 2 H(+)(in) = 2 reduced [plastocyanin] + a plastoquinone + 4 H(+)(out). In terms of biological role, component of the cytochrome b6-f complex, which mediates electron transfer between photosystem II (PSII) and photosystem I (PSI), cyclic electron flow around PSI, and state transitions. The chain is Cytochrome b6-f complex iron-sulfur subunit from Prochlorococcus marinus (strain MIT 9303).